The primary structure comprises 609 residues: Proline--tRNA ligase (609 aa).

This sequence belongs to the class-II aminoacyl-tRNA synthetase family. ProS type 1 subfamily. Homodimer.

The protein resides in the cytoplasm. The catalysed reaction is tRNA(Pro) + L-proline + ATP = L-prolyl-tRNA(Pro) + AMP + diphosphate. Functionally, catalyzes the attachment of proline to tRNA(Pro) in a two-step reaction: proline is first activated by ATP to form Pro-AMP and then transferred to the acceptor end of tRNA(Pro). As ProRS can inadvertently accommodate and process non-cognate amino acids such as alanine and cysteine, to avoid such errors it has two additional distinct editing activities against alanine. One activity is designated as 'pretransfer' editing and involves the tRNA(Pro)-independent hydrolysis of activated Ala-AMP. The other activity is designated 'posttransfer' editing and involves deacylation of mischarged Ala-tRNA(Pro). The misacylated Cys-tRNA(Pro) is not edited by ProRS. This is Proline--tRNA ligase from Synechococcus sp. (strain JA-2-3B'a(2-13)) (Cyanobacteria bacterium Yellowstone B-Prime).